Reading from the N-terminus, the 172-residue chain is Acetolactate synthase small subunit (172 aa).

Positions 4 to 78 (TLSVLVEDEA…NVIKVQDITE (75 aa)) constitute an ACT domain.

It belongs to the acetolactate synthase small subunit family. Dimer of large and small chains.

The enzyme catalyses 2 pyruvate + H(+) = (2S)-2-acetolactate + CO2. Its pathway is amino-acid biosynthesis; L-isoleucine biosynthesis; L-isoleucine from 2-oxobutanoate: step 1/4. It functions in the pathway amino-acid biosynthesis; L-valine biosynthesis; L-valine from pyruvate: step 1/4. This chain is Acetolactate synthase small subunit (ilvH), found in Synechocystis sp. (strain ATCC 27184 / PCC 6803 / Kazusa).